We begin with the raw amino-acid sequence, 301 residues long: Acetylglutamate kinase (301 aa).

Substrate is bound by residues glycine 72–glycine 73, arginine 94, and asparagine 199.

The protein belongs to the acetylglutamate kinase family. ArgB subfamily.

The protein localises to the cytoplasm. The catalysed reaction is N-acetyl-L-glutamate + ATP = N-acetyl-L-glutamyl 5-phosphate + ADP. It participates in amino-acid biosynthesis; L-arginine biosynthesis; N(2)-acetyl-L-ornithine from L-glutamate: step 2/4. Its function is as follows. Catalyzes the ATP-dependent phosphorylation of N-acetyl-L-glutamate. The chain is Acetylglutamate kinase from Bartonella tribocorum (strain CIP 105476 / IBS 506).